Reading from the N-terminus, the 250-residue chain is Hydroxyacylglutathione hydrolase (250 aa).

His-52, His-54, Asp-56, His-57, His-107, Asp-128, and His-166 together coordinate Zn(2+).

This sequence belongs to the metallo-beta-lactamase superfamily. Glyoxalase II family. Monomer. Zn(2+) serves as cofactor.

It carries out the reaction an S-(2-hydroxyacyl)glutathione + H2O = a 2-hydroxy carboxylate + glutathione + H(+). Its pathway is secondary metabolite metabolism; methylglyoxal degradation; (R)-lactate from methylglyoxal: step 2/2. Functionally, thiolesterase that catalyzes the hydrolysis of S-D-lactoyl-glutathione to form glutathione and D-lactic acid. The chain is Hydroxyacylglutathione hydrolase from Neisseria gonorrhoeae (strain ATCC 700825 / FA 1090).